We begin with the raw amino-acid sequence, 20 residues long: Antifungal protein (20 aa).

It belongs to the protease inhibitor I3 (leguminous Kunitz-type inhibitor) family.

Inhibits soybean trypsin. Has antifungal activity against R.cerealis, A.brassicae and A.niger, and weak antifungal activity against F.oxysporum. The protein is Antifungal protein of Cullen corylifolium (Malaysian scurfpea).